A 420-amino-acid chain; its full sequence is UDP-glucuronic acid decarboxylase 1 (420 aa).

Methionine 1 is subject to N-acetylmethionine. Residues 1-19 (MVSKGLLRLVSSVNRRKMK) lie on the Cytoplasmic side of the membrane. A helical; Signal-anchor for type II membrane protein membrane pass occupies residues 20–40 (LLLGIALFAYAASVWGNFVNM). At 41–420 (RSIQENGELK…RVKKGRTRHS (380 aa)) the chain is on the lumenal side. A Phosphothreonine modification is found at threonine 94. Residues glycine 98, phenylalanine 99, valine 100, aspartate 119, asparagine 120, phenylalanine 122, threonine 123, glycine 124, aspartate 144, and valine 145 each coordinate NAD(+). Positions 149 and 150 each coordinate UDP-alpha-D-glucuronate. Positions 159 and 161 each coordinate NAD(+). Position 177 (lysine 177) interacts with UDP-alpha-D-glucuronate. Threonine 178 is an NAD(+) binding site. Positions 185, 188, 191, and 192 each coordinate UDP-alpha-D-glucuronate. NAD(+) contacts are provided by alanine 200, tyrosine 231, and lysine 235. Tyrosine 231 (proton acceptor) is an active-site residue. UDP-alpha-D-glucuronate is bound by residues tyrosine 245, glutamine 248, and glutamate 249. The NAD(+) site is built by threonine 261, histidine 267, and arginine 272. Asparagine 316 carries N-linked (GlcNAc...) asparagine glycosylation.

This sequence belongs to the NAD(P)-dependent epimerase/dehydratase family. UDP-glucuronic acid decarboxylase subfamily. In terms of assembly, homodimer and homotetramer. Interacts with AKT1. NAD(+) is required as a cofactor. Ubiquitous. Detected in heart, brain, spleen, lung, testis, liver, skeletal muscle and kidney.

The protein resides in the golgi apparatus. Its subcellular location is the golgi stack membrane. The enzyme catalyses UDP-alpha-D-glucuronate + H(+) = UDP-alpha-D-xylose + CO2. It functions in the pathway nucleotide-sugar biosynthesis; UDP-alpha-D-xylose biosynthesis; UDP-alpha-D-xylose from UDP-alpha-D-glucuronate: step 1/1. Its function is as follows. Catalyzes the NAD-dependent decarboxylation of UDP-glucuronic acid to UDP-xylose. Necessary for the biosynthesis of the core tetrasaccharide in glycosaminoglycan biosynthesis. This chain is UDP-glucuronic acid decarboxylase 1, found in Rattus norvegicus (Rat).